Consider the following 4047-residue polypeptide: Cubilin homolog (4047 aa).

An N-terminal signal peptide occupies residues 1–22 (MIPNLQLFLSLILFGLLNHVSS). 3 N-linked (GlcNAc...) asparagine glycosylation sites follow: N56, N92, and N127. Residues 168-205 (AINACDPNKCSNGGTCIPSFGAKFTCLCPPHFTGTTCE) enclose the EGF-like 1 domain. 26 disulfides stabilise this stretch: C172/C183, C177/C193, C195/C204, C211/C227, C221/C236, C238/C247, C310/C321, C315/C330, C333/C344, C350/C363, C357/C372, C375/C386, C392/C403, C397/C418, C420/C434, C442/C453, C447/C463, C465/C474, C480/C491, C485/C500, C502/C511, C518/C544, C577/C601, C645/C667, C696/C719, and C769/C801. Residues 207 to 248 (DIDECSVYNGTTAGCQNNGTCINNRGGFECQCQSGYHGSLCQ) form the EGF-like 2; calcium-binding domain. N215 and N224 each carry an N-linked (GlcNAc...) asparagine glycan. Positions 306–345 (DVNECESNPCHPGVDCINLPGSFVCSGCPKGYKTDGNVCI) constitute an EGF-like 3; calcium-binding domain. The region spanning 346–387 (DVNECEGEIRVCSPLSKCHNTLGSYYCDSCPTGYSGDGGNCV) is the EGF-like 4; calcium-binding domain. EGF-like domains are found at residues 388–435 (KDDS…EGCV), 438–475 (ASNV…KFCE), and 476–512 (KTSP…RACE). 10 consecutive CUB domains span residues 518–641 (CGSH…WETV), 645–763 (CGYR…YKFT), 769–934 (CGAE…YEML), 934–1061 (LCEK…YKTS), 1065–1182 (CGGV…FEAV), 1188–1300 (CDFT…YETI), 1304–1427 (CGGR…FTTL), 1428–1558 (CNGI…WNTL), 1560–1680 (CSRD…VEFV), and 1691–1841 (CGQV…MIPK). N528, N537, and N583 each carry an N-linked (GlcNAc...) asparagine glycan. 3 N-linked (GlcNAc...) asparagine glycosylation sites follow: N775, N806, and N811. C877 and C896 are disulfide-bonded. A glycan (N-linked (GlcNAc...) asparagine) is linked at N942. 3 cysteine pairs are disulfide-bonded: C1065/C1091, C1120/C1145, and C1188/C1211. An N-linked (GlcNAc...) asparagine glycan is attached at N1133. An N-linked (GlcNAc...) asparagine glycan is attached at N1229. C1234 and C1262 are oxidised to a cystine. An N-linked (GlcNAc...) asparagine glycan is attached at N1294. C1304 and C1330 are joined by a disulfide. The N-linked (GlcNAc...) asparagine glycan is linked to N1353. Disulfide bonds link C1428–C1455, C1488–C1522, and C1560–C1586. An N-linked (GlcNAc...) asparagine glycan is attached at N1513. N-linked (GlcNAc...) asparagine glycans are attached at residues N1613, N1631, N1648, and N1674. C1614 and C1641 are disulfide-bonded. A disulfide bond links C1691 and C1720. 4 N-linked (GlcNAc...) asparagine glycosylation sites follow: N1762, N1782, N1866, and N1890. Cysteines 1955 and 1979 form a disulfide. The 129-residue stretch at 1955 to 2083 (CGGEVRHSQG…PLFKARYEKV (129 aa)) folds into the CUB 11 domain. Residues N2005, N2016, and N2017 are each glycosylated (N-linked (GlcNAc...) asparagine). A disulfide bridge connects residues C2006 and C2027. A disordered region spans residues 2052-2071 (ASDGNDDDDDTPDIDQQDSN). Over residues 2055–2067 (GNDDDDDTPDIDQ) the composition is skewed to acidic residues. N2193 is a glycosylation site (N-linked (GlcNAc...) asparagine). 2 disulfide bridges follow: C2207–C2238 and C2265–C2295. CUB domains lie at 2207-2334 (CGGD…YRLT), 2335-2463 (CNSF…IKEQ), 2467-2588 (CPSG…YGIA), 2590-2717 (CGGT…VTMS), and 2721-2859 (CGGR…YMAI). N-linked (GlcNAc...) asparagine glycans are attached at residues N2301 and N2305. Cystine bridges form between C2335–C2368 and C2395–C2424. The N-linked (GlcNAc...) asparagine glycan is linked to N2434. Disulfide bonds link C2467–C2498 and C2590–C2619. N-linked (GlcNAc...) asparagine glycans are attached at residues N2599, N2645, N2657, and N2692. Residues C2646 and C2668 are joined by a disulfide bond. Disulfide bonds link C2721/C2747 and C2786/C2809. N-linked (GlcNAc...) asparagine glycosylation is found at N2811, N2845, N2875, and N2988. 4 disulfide bridges follow: C2996–C3025, C3052–C3074, C3127–C3154, and C3181–C3217. CUB domains lie at 2996-3121 (CGGV…YEFL), 3127-3254 (CGYH…WEAE), 3255-3385 (CGAI…YSIN), 3387-3508 (CGDN…VISS), 3515-3641 (CGGK…YSIV), 3645-3783 (CGGW…YNIL), and 3786-3900 (CNRT…YYTV). An N-linked (GlcNAc...) asparagine glycan is attached at N3235. Cystine bridges form between C3255-C3281, C3315-C3335, and C3387-C3418. 2 N-linked (GlcNAc...) asparagine glycosylation sites follow: N3421 and N3461. 2 cysteine pairs are disulfide-bonded: C3445–C3468 and C3515–C3544. N-linked (GlcNAc...) asparagine glycosylation occurs at N3635. 2 cysteine pairs are disulfide-bonded: C3645–C3680 and C3708–C3742. 5 N-linked (GlcNAc...) asparagine glycosylation sites follow: N3770, N3787, N3812, N3858, and N3930. 2 cysteine pairs are disulfide-bonded: C3786-C3815 and C3845-C3863.

The protein localises to the secreted. Functionally, cotransporter which plays a role in lipoprotein, vitamin and iron metabolism, by facilitating their uptake. This Caenorhabditis elegans protein is Cubilin homolog.